The primary structure comprises 214 residues: Large ribosomal subunit protein uL1 (214 aa).

This sequence belongs to the universal ribosomal protein uL1 family. In terms of assembly, part of the 50S ribosomal subunit.

Binds directly to 23S rRNA. Probably involved in E site tRNA release. In terms of biological role, protein L1 is also a translational repressor protein, it controls the translation of its operon by binding to its mRNA. The polypeptide is Large ribosomal subunit protein uL1 (Methanopyrus kandleri (strain AV19 / DSM 6324 / JCM 9639 / NBRC 100938)).